An 844-amino-acid polypeptide reads, in one-letter code: Neuronal PAS domain-containing protein 4B (844 aa).

Positions 61-74 are basic motif; degenerate; the sequence is KMYRSTKGASKARR. The bHLH domain maps to 61-114; it reads KMYRSTKGASKARRDQINAEIRSLKELLPISDADKARLSYLHIMSLACIYTRKS. The interval 75–114 is helix-loop-helix motif; sequence DQINAEIRSLKELLPISDADKARLSYLHIMSLACIYTRKS. PAS domains follow at residues 132-190 and 294-343; these read SLPE…PVDH and DMRI…LHNG. Residues 410–422 are compositionally biased toward polar residues; that stretch reads SRQSSDPLSSPDQ. Disordered stretches follow at residues 410–432, 444–479, 702–725, and 757–784; these read SRQSSDPLSSPDQVFTPSSSGLS, GRSSSEELPGTSAPSSMTFDPLEGEEIDPQSHGGGH, PLPNLPSPSPVPPSPYSSVPSYSQ, and TEGGLQDGERPDEDMEMMSSQRSSEAPA. Residues 704–716 show a composition bias toward pro residues; sequence PNLPSPSPVPPSP.

Efficient DNA binding requires dimerization with another bHLH protein.

It is found in the nucleus. In terms of biological role, transcription factor expressed in neurons of the brain that regulates the excitatory-inhibitory balance within neural circuits and is required for contextual memory in the hippocampus. Plays a key role in the structural and functional plasticity of neurons. Acts as an early-response transcription factor in both excitatory and inhibitory neurons, where it induces distinct but overlapping sets of late-response genes in these two types of neurons, allowing the synapses that form on inhibitory and excitatory neurons to be modified by neuronal activity in a manner specific to their function within a circuit, thereby facilitating appropriate circuit responses to sensory experience. The chain is Neuronal PAS domain-containing protein 4B (npas4b) from Danio rerio (Zebrafish).